A 391-amino-acid chain; its full sequence is Phosphoglycerate kinase (391 aa).

Substrate contacts are provided by residues 21-23 (DLN), R36, 59-62 (HLGR), R113, and R146. Residues K197, E319, and 345–348 (GGDT) contribute to the ATP site.

This sequence belongs to the phosphoglycerate kinase family. In terms of assembly, monomer.

The protein localises to the cytoplasm. It catalyses the reaction (2R)-3-phosphoglycerate + ATP = (2R)-3-phospho-glyceroyl phosphate + ADP. The protein operates within carbohydrate degradation; glycolysis; pyruvate from D-glyceraldehyde 3-phosphate: step 2/5. This chain is Phosphoglycerate kinase, found in Stenotrophomonas maltophilia (strain K279a).